The chain runs to 137 residues: Nucleoside diphosphate kinase (137 aa).

Residues Lys9, Phe57, Arg85, Thr91, Arg102, and Asn112 each coordinate ATP. The active-site Pros-phosphohistidine intermediate is the His115.

Belongs to the NDK family. Homotetramer. The cofactor is Mg(2+).

The protein resides in the cytoplasm. It catalyses the reaction a 2'-deoxyribonucleoside 5'-diphosphate + ATP = a 2'-deoxyribonucleoside 5'-triphosphate + ADP. The enzyme catalyses a ribonucleoside 5'-diphosphate + ATP = a ribonucleoside 5'-triphosphate + ADP. Major role in the synthesis of nucleoside triphosphates other than ATP. The ATP gamma phosphate is transferred to the NDP beta phosphate via a ping-pong mechanism, using a phosphorylated active-site intermediate. In Campylobacter curvus (strain 525.92), this protein is Nucleoside diphosphate kinase.